Reading from the N-terminus, the 273-residue chain is Non-structural protein NS-S (273 aa).

The protein belongs to the phlebovirus NS-S protein family. As to quaternary structure, interacts with host MAVS; this interaction weakly inhibits the host IFN response.

Its subcellular location is the host cytoplasm. Functionally, acts as a weak IFN antagonist. The polypeptide is Non-structural protein NS-S (NSS) (Homo sapiens (Human)).